We begin with the raw amino-acid sequence, 62 residues long: Short neurotoxin B (62 aa).

A compositionally biased stretch (polar residues) spans 1 to 16; it reads RRCFNHPSSQPQTNKS. The tract at residues 1 to 21 is disordered; it reads RRCFNHPSSQPQTNKSCPPGE. Cystine bridges form between cysteine 3–cysteine 24, cysteine 17–cysteine 41, cysteine 43–cysteine 54, and cysteine 55–cysteine 60.

This sequence belongs to the three-finger toxin family. Short-chain subfamily. Type I alpha-neurotoxin sub-subfamily. In terms of tissue distribution, expressed by the venom gland.

It localises to the secreted. Binds to muscle nicotinic acetylcholine receptor (nAChR) and inhibit acetylcholine from binding to the receptor, thereby impairing neuromuscular transmission. The protein is Short neurotoxin B of Laticauda crockeri (Crocker's sea snake).